Consider the following 571-residue polypeptide: Sulfite reductase [NADPH] hemoprotein beta-component (571 aa).

[4Fe-4S] cluster contacts are provided by Cys435, Cys441, Cys480, and Cys484. Siroheme is bound at residue Cys484.

The protein belongs to the nitrite and sulfite reductase 4Fe-4S domain family. In terms of assembly, alpha(8)-beta(8). The alpha component is a flavoprotein, the beta component is a hemoprotein. Siroheme is required as a cofactor. Requires [4Fe-4S] cluster as cofactor.

It catalyses the reaction hydrogen sulfide + 3 NADP(+) + 3 H2O = sulfite + 3 NADPH + 4 H(+). It participates in sulfur metabolism; hydrogen sulfide biosynthesis; hydrogen sulfide from sulfite (NADPH route): step 1/1. Functionally, component of the sulfite reductase complex that catalyzes the 6-electron reduction of sulfite to sulfide. This is one of several activities required for the biosynthesis of L-cysteine from sulfate. This chain is Sulfite reductase [NADPH] hemoprotein beta-component, found in Dickeya chrysanthemi (strain Ech1591) (Dickeya zeae (strain Ech1591)).